Here is a 250-residue protein sequence, read N- to C-terminus: Uracil-DNA glycosylase (250 aa).

Asp78 functions as the Proton acceptor in the catalytic mechanism. Residues 228–250 (RGQKPVDWSGEQNNASRQGKFAL) form a disordered region.

This sequence belongs to the uracil-DNA glycosylase (UDG) superfamily. UNG family.

It is found in the cytoplasm. It catalyses the reaction Hydrolyzes single-stranded DNA or mismatched double-stranded DNA and polynucleotides, releasing free uracil.. Functionally, excises uracil residues from the DNA which can arise as a result of misincorporation of dUMP residues by DNA polymerase or due to deamination of cytosine. The chain is Uracil-DNA glycosylase from Bordetella bronchiseptica (strain ATCC BAA-588 / NCTC 13252 / RB50) (Alcaligenes bronchisepticus).